The sequence spans 84 residues: Hepcidin (84 aa).

An N-terminal signal peptide occupies residues 1–24 (MALSSQIWAACLLLLLLLASLTSG). The propeptide occupies 25 to 54 (SVFPQQTGQLAELQPQDRAGARAGWTPMLQ). Cystine bridges form between C69-C72, C70-C78, and C73-C81.

It belongs to the hepcidin family. Interacts with SLC40A1; this interaction promotes SLC40A1 rapid ubiquitination.

It localises to the secreted. In terms of biological role, liver-produced hormone that constitutes the main circulating regulator of iron absorption and distribution across tissues. Acts by promoting endocytosis and degradation of ferroportin/SLC40A1, leading to the retention of iron in iron-exporting cells and decreased flow of iron into plasma. Controls the major flows of iron into plasma: absorption of dietary iron in the intestine, recycling of iron by macrophages, which phagocytose old erythrocytes and other cells, and mobilization of stored iron from hepatocytes. Its function is as follows. Has strong antimicrobial activity against E.coli ML35P N.cinerea and weaker against S.epidermidis, S.aureus and group b streptococcus bacteria. Active against the fungus C.albicans. No activity against P.aeruginosa. The sequence is that of Hepcidin (HAMP) from Pongo abelii (Sumatran orangutan).